A 458-amino-acid chain; its full sequence is uncharacterized protein (458 aa).

Residues P8 to K66 enclose the TRAM domain. [4Fe-4S] cluster contacts are provided by C79, C85, C88, and C166. 4 residues coordinate S-adenosyl-L-methionine: Q290, Y319, E340, and D388. C415 (nucleophile) is an active-site residue.

The protein belongs to the class I-like SAM-binding methyltransferase superfamily. RNA M5U methyltransferase family.

This is an uncharacterized protein from Bacillus cereus (strain ATCC 14579 / DSM 31 / CCUG 7414 / JCM 2152 / NBRC 15305 / NCIMB 9373 / NCTC 2599 / NRRL B-3711).